A 5112-amino-acid polypeptide reads, in one-letter code: Malformin synthetase mlfA (5112 aa).

The tract at residues 225 to 616 is adenylation 1; sequence ERHAANRPHS…CGRADTQVKL (392 aa). The 74-residue stretch at 757–830 folds into the Carrier 1 domain; it reads SRLEQEIQLA…EAASLAEVQE (74 aa). The residue at position 791 (Ser-791) is an O-(pantetheine 4'-phosphoryl)serine. The interval 868-1299 is condensation 1; sequence EDVFPCTTMQ…ALDSLTLLQA (432 aa). The segment at 1327-1716 is adenylation 2; it reads DRRVTRQPDT…GRKDTQVKLR (390 aa). Residues 1854 to 1931 form the Carrier 2 domain; that stretch reads TAASELERTL…QLAAELGESP (78 aa). At Ser-1891 the chain carries O-(pantetheine 4'-phosphoryl)serine. Disordered stretches follow at residues 1926–1961 and 1994–2034; these read ELGE…DGVD and GGSS…VPEP. Low complexity-rich tracts occupy residues 1930–1941 and 1994–2012; these read SPRSSTSSASSS and GGSS…SSSS. The segment at 2064-2479 is condensation 2; sequence EDIYPATALQ…AVSYSDKQTL (416 aa). An adenylation 3 region spans residues 2502-2894; it reads IRTPHAPAVC…IGRRDGQVKL (393 aa). One can recognise a Carrier 3 domain in the interval 3030–3106; that stretch reads RPTTAKECEM…QLLFHLRNAK (77 aa). Ser-3067 bears the O-(pantetheine 4'-phosphoryl)serine mark. Condensation regions lie at residues 3122-3586 and 3607-4044; these read WVDL…TYEQ and NIYP…EQLV. The adenylation 4 stretch occupies residues 4069 to 4459; it reads HSSRQAVCAW…VGRKDNQIKF (391 aa). Residues 4593-4669 form the Carrier 4 domain; it reads MPSTEAECIM…DLARHNSLVQ (77 aa). At Ser-4630 the chain carries O-(pantetheine 4'-phosphoryl)serine. The interval 4724 to 5106 is condensation 5; that stretch reads IVVDIPGRIS…VEKVVALLRD (383 aa).

Belongs to the NRP synthetase family.

It functions in the pathway secondary metabolite biosynthesis. Nonribosomal peptide synthetase; part of the gene cluster that mediates the biosynthesis of malformins, cyclic pentapeptides with a disulfide bond between 2 consecutive cysteins, that show potential anti-tumor as well as antimalarial and antitrypanosomal properties. The nonribosomal peptide synthetase mlfA is responsible of the formation of the cyclic pentapeptide. MlfA probably acts iteratively on one amino acid and possesses multiple amino acid specificities since it is involved in the biosynthesis of multiple malformins, including malformin C and malformin A2. Malformin C corresponds to a cyclo[D-Cys-D-Cys-Val-D-Leu-Val] pentapeptide whereas malformin A2 corresponds to a cyclo[D-Cys-D-Cys-Val-D-Leu-Ile] pentapeptide. The malformin biosynthesis clusters in malformin-producing fungi also contain enzymes involved in the formation of the disulfide bond between the two consecutive cysteins within malformins, in addition to additional tailoring enzymes such as methyltransferases or oxidoreductases. They are also composed of up to 4 major facilitator superfamily transporters, and transcription factors probably involved in the regulation of the expression of those clusters. The sequence is that of Malformin synthetase mlfA from Aspergillus brasiliensis (strain CBS 101740 / IMI 381727 / IBT 21946).